The sequence spans 564 residues: MEEGTAMRKGGWWLALGMFSASALATCPDWPLARGRQETSRLHQQIVAWKEAYWRQGASGVSDDVYDQLTLRLAQWRQCFPGATPEDDDLPPPTGDARHPVAHTGVRKLADEDSVARWMKNKSDLWIQPKVDGVAVTLVYRQGRLVQAISRGDGLRGEAWTARARQIPALAKVMTGELADSVLQGELFLRRDGHVQQQTGGMNARAKVAGLMMRADAAAALSQLDVFIWAWPDGPSDMRRRQQLLAQAGFKYSGQYTHPVSRIEQVAQWRQRWYRSPLPFVSDGVIVREGREPPGRVWSPGKGEWLAAWKYPPASRVMQVRAIRFSIGRSGRLNVVAELEPQRLDDKRVQRVNVGSVSRWQMLDIGVGDQLQISLAGQGIPRVDAVVWRTAERHKPTPPPAKFNALTCYFATPECSEQFLSRLIWLSSKSALNVDGVGENLWRVIQQQNPMTHIFSWLALTVEQLQAVPGISAARGQHLWHQFDLVRKRPFIRWVLAMGIPVPQGALAQLESENWHLLAAKSEAQWRTLPGVGEIRARQLVAFLHHPDVVALAQWLSGQRIPGF.

The active-site N6-AMP-lysine intermediate is lysine 130.

It belongs to the NAD-dependent DNA ligase family. LigB subfamily.

It carries out the reaction NAD(+) + (deoxyribonucleotide)n-3'-hydroxyl + 5'-phospho-(deoxyribonucleotide)m = (deoxyribonucleotide)n+m + AMP + beta-nicotinamide D-nucleotide.. Catalyzes the formation of phosphodiester linkages between 5'-phosphoryl and 3'-hydroxyl groups in double-stranded DNA using NAD as a coenzyme and as the energy source for the reaction. The chain is DNA ligase B from Klebsiella pneumoniae subsp. pneumoniae (strain ATCC 700721 / MGH 78578).